The following is a 450-amino-acid chain: Calcium-binding and coiled-coil domain-containing protein 2 (450 aa).

Residues 133–136 carry the CLIR motif; the sequence is ILVV. Positions 135–349 form a coiled coil; the sequence is VVTTQSEVEE…RENNRLLSYM (215 aa). The LIR-like signature appears at 203–206; it reads DCWE. The interaction with LGALS8 stretch occupies residues 371–381; sequence DPGLVFGNPYS. Residues 395-450 form an interaction with MYO6 region; the sequence is KKCPTCKSDFAADVFDHNLALEQHLQTLSLNCPICDKTFPAKEKQIFEDHVFCHTL. Residues 423 to 448 form a UBZ1-type zinc finger; it reads SLNCPICDKTFPAKEKQIFEDHVFCH. Zn(2+)-binding residues include cysteine 426, cysteine 429, histidine 444, and histidine 448.

This sequence belongs to the CALCOCO family. As to quaternary structure, dimer. Part of a complex consisting of CALCOCO2, TAX1BP1 and MYO6. Interacts with GEMIN4. Interacts with ATG8 family members MAP1LC3A, MAP1LC3B, GABARAP, GABARAPL1 and GABARAPL2. Interacts with ATG8 family member MAP1LC3C. Interacts with LGALS8. Interacts with TOM1; the interaction is indirect and is mediated by MYO6, which acts as a bridge between TOM1 and CALCOCO2. Interacts with AZI2.

Its subcellular location is the cytoplasm. The protein resides in the perinuclear region. The protein localises to the cytoskeleton. It localises to the cytoplasmic vesicle. It is found in the autophagosome membrane. Functionally, xenophagy-specific receptor required for autophagy-mediated intracellular bacteria degradation. Acts as an effector protein of galectin-sensed membrane damage that restricts the proliferation of infecting pathogens upon entry into the cytosol by targeting LGALS8-associated bacteria for autophagy. Initially orchestrates bacteria targeting to autophagosomes and subsequently ensures pathogen degradation by regulating pathogen-containing autophagosome maturation. Bacteria targeting to autophagosomes relies on its interaction with MAP1LC3A, MAP1LC3B and/or GABARAPL2, whereas regulation of pathogen-containing autophagosome maturation requires the interaction with MAP3LC3C. May play a role in ruffle formation and actin cytoskeleton organization and seems to negatively regulate constitutive secretion. The protein is Calcium-binding and coiled-coil domain-containing protein 2 of Bos taurus (Bovine).